A 311-amino-acid chain; its full sequence is Pyrimidine-specific ribonucleoside hydrolase RihA (311 aa).

Residue histidine 240 is part of the active site.

It belongs to the IUNH family. RihA subfamily.

In terms of biological role, hydrolyzes cytidine or uridine to ribose and cytosine or uracil, respectively. This chain is Pyrimidine-specific ribonucleoside hydrolase RihA, found in Salmonella typhimurium (strain LT2 / SGSC1412 / ATCC 700720).